The sequence spans 542 residues: Probable quinate permease (542 aa).

The Cytoplasmic portion of the chain corresponds to 1 to 22 (MSILALVEDRPTPKEVYNWRIY). A helical membrane pass occupies residues 23–43 (LLAAVASFTSCMIGYDSAFIG). The Extracellular segment spans residues 44 to 66 (TTLALSSFREEFGFNTMSKTAVN). Residues 67 to 87 (LVSANIVSCYQAGAFFGAFLA) traverse the membrane as a helical segment. Over 88–97 (YPVGHFWGRK) the chain is Cytoplasmic. The chain crosses the membrane as a helical span at residues 98 to 118 (WGLLFSGAIFTLGAGLMLGAD). Topologically, residues 119–130 (GDRGLGLLYGGR) are extracellular. Residues 131–151 (VLAGLGVGAGSNITPIYISEM) form a helical membrane-spanning segment. Residues 152 to 159 (APPSIRGR) are Cytoplasmic-facing. A helical transmembrane segment spans residues 160-180 (LVGVYELGWQIGGLVGFWINY). Topologically, residues 181 to 193 (GVSETLAPSHKQW) are extracellular. Residues 194–214 (IIPFAVQLIPSGLLLIGAVFL) traverse the membrane as a helical segment. Residues 215-285 (KESPRWLFSR…AGTNKKVMYR (71 aa)) are Cytoplasmic-facing. A helical membrane pass occupies residues 286 to 306 (LFLGSMLFFWQNGSGINAINY). Residues 307-325 (YSPTVFKSIGLQGANTSMF) are Extracellular-facing. The chain crosses the membrane as a helical span at residues 326 to 346 (STGIFGVVKTVVTFVWLLYLI). Topologically, residues 347–352 (DRLGRR) are cytoplasmic. Residues 353–373 (LLLLIGAAGASVCLFIVGAYI) traverse the membrane as a helical segment. Over 374–387 (KIADPASNPTQEMT) the chain is Extracellular. A helical membrane pass occupies residues 388–408 (GGGIAAMFFFYLYTVFYTPSW). Topologically, residues 409 to 456 (NGTPWVMNSEMFEPNMRSLAQACAAASNWFWNFLISRFTPQMFAKMEY) are cytoplasmic. A helical membrane pass occupies residues 457–477 (GVWFFFASLMVLSIVFVFFLL). Topologically, residues 478–542 (PETKGIPLES…EHLSEDLPKV (65 aa)) are extracellular. The disordered stretch occupies residues 519-542 (IEESGYSKTGDQQVEHLSEDLPKV). A compositionally biased stretch (basic and acidic residues) spans 531-542 (QVEHLSEDLPKV).

This sequence belongs to the major facilitator superfamily. Sugar transporter (TC 2.A.1.1) family. Interacts with creB. In terms of processing, ubiquitinated. Deubiquitinated by creB, probably to control its activity or amount.

It localises to the cell membrane. Functionally, integral membrane transporter that imports quinic acid to be catabolized as a carbon source. This is Probable quinate permease (qutD) from Neosartorya fischeri (strain ATCC 1020 / DSM 3700 / CBS 544.65 / FGSC A1164 / JCM 1740 / NRRL 181 / WB 181) (Aspergillus fischerianus).